The sequence spans 86 residues: Toxin To8 (86 aa).

The signal sequence occupies residues 1–20 (MTRFVLFISCFFLIGMVVEC). In terms of domain architecture, LCN-type CS-alpha/beta spans 21 to 83 (KEGYLLGSRG…LWESDTNECG (63 aa)). Cystine bridges form between Cys31-Cys82, Cys35-Cys57, Cys43-Cys63, and Cys47-Cys65. Residue Cys82 is modified to Cysteine amide.

The protein belongs to the long (4 C-C) scorpion toxin superfamily. Sodium channel inhibitor family. Beta subfamily. As to expression, expressed by the venom gland.

The protein resides in the secreted. In terms of biological role, beta toxins bind voltage-independently at site-4 of sodium channels (Nav) and shift the voltage of activation toward more negative potentials thereby affecting sodium channel activation and promoting spontaneous and repetitive firing. The sequence is that of Toxin To8 from Tityus obscurus (Amazonian scorpion).